We begin with the raw amino-acid sequence, 485 residues long: Glutamate--tRNA ligase (485 aa).

The 'HIGH' region motif lies at 11 to 21 (PSPTGLLHIGN). Positions 255–259 (KLSKR) match the 'KMSKS' region motif. ATP is bound at residue K258.

It belongs to the class-I aminoacyl-tRNA synthetase family. Glutamate--tRNA ligase type 1 subfamily. Monomer.

It is found in the cytoplasm. The enzyme catalyses tRNA(Glu) + L-glutamate + ATP = L-glutamyl-tRNA(Glu) + AMP + diphosphate. Functionally, catalyzes the attachment of glutamate to tRNA(Glu) in a two-step reaction: glutamate is first activated by ATP to form Glu-AMP and then transferred to the acceptor end of tRNA(Glu). The protein is Glutamate--tRNA ligase of Streptococcus gordonii (strain Challis / ATCC 35105 / BCRC 15272 / CH1 / DL1 / V288).